Here is a 406-residue protein sequence, read N- to C-terminus: Nicotinate phosphoribosyltransferase (406 aa).

Residue His227 is modified to Phosphohistidine; by autocatalysis.

It belongs to the NAPRTase family. In terms of processing, transiently phosphorylated on a His residue during the reaction cycle. Phosphorylation strongly increases the affinity for substrates and increases the rate of nicotinate D-ribonucleotide production. Dephosphorylation regenerates the low-affinity form of the enzyme, leading to product release.

The enzyme catalyses nicotinate + 5-phospho-alpha-D-ribose 1-diphosphate + ATP + H2O = nicotinate beta-D-ribonucleotide + ADP + phosphate + diphosphate. It participates in cofactor biosynthesis; NAD(+) biosynthesis; nicotinate D-ribonucleotide from nicotinate: step 1/1. Catalyzes the synthesis of beta-nicotinate D-ribonucleotide from nicotinate and 5-phospho-D-ribose 1-phosphate at the expense of ATP. The polypeptide is Nicotinate phosphoribosyltransferase (Methanosarcina mazei (strain ATCC BAA-159 / DSM 3647 / Goe1 / Go1 / JCM 11833 / OCM 88) (Methanosarcina frisia)).